Reading from the N-terminus, the 2343-residue chain is Pecanex-like protein 1 (2343 aa).

Transmembrane regions (helical) follow at residues 33–53 and 57–77; these read ALHLYLWLFLLGLPFTLYMAL and MIIVAVYCPVVAAVFIVLKMV. 4 disordered regions span residues 98–163, 271–290, 306–691, and 749–826; these read FTDQ…GSSR, SHSYRKEHRPRGVPRTSSSA, QQQR…TRAR, and TRSR…QGQQ. Positions 143-163 are enriched in polar residues; sequence SSRNSYAGLDPSNQIGSGSSR. A compositionally biased stretch (basic residues) spans 272–282; the sequence is HSYRKEHRPRG. The span at 372–390 shows a compositional bias: low complexity; it reads SLRSLSTRSSGSTESYCSG. The segment covering 396 to 412 has biased composition (polar residues); the sequence is NSTLSSYKSEQTSSTHI. Basic and acidic residues-rich tracts occupy residues 416–457, 507–521, and 530–546; these read LSEH…DKTA, RPPEQSAESKEEQGE, and KVCKDDGGKQKEGDVRP. Residues 556 to 571 are compositionally biased toward basic residues; it reads TSAHKPGRRRTGKKRA. Composition is skewed to low complexity over residues 624-637, 769-780, and 809-826; these read SDSSSSATSHSCQS, AATGAAQASEEA, and TLLIGPPLSLQDGQQGQQ. A run of 13 helical transmembrane segments spans residues 978-998, 1009-1029, 1034-1054, 1068-1088, 1118-1138, 1162-1182, 1195-1215, 1268-1288, 1296-1316, 1406-1426, 1434-1454, 1458-1478, and 1493-1513; these read FWILPQLWIGINFDRLTLLAL, ILAVVLAILVAFLGSILLIQG, IWVFQFCLVIASCQYSLLKSV, IIAYSRPVYFCLCCGLIWLLD, LVIVFTLCFPIVFFIGLLPQV, LLAALYSFLCSVVAVALLYGL, HIPVLFSVFCGLLVAVSYHLS, LVVCVVIGVLYFAIHVSTVFT, YVLYALVGFVGLVTHYVLPQV, SFSSPTYQYITVIFTVLFFKF, TMLLDLFFMSILFSKLWELLY, FVYTYVAPWQITWGSAFHAFA, and AVVSALFSTPLNPFLGSAIFI. The disordered stretch occupies residues 2050 to 2120; sequence EDSDTGGGTS…VQSSLVRQSP (71 aa). Polar residues-rich tracts occupy residues 2060 to 2080 and 2094 to 2117; these read CPANSATTASDPHNSVPQGST and PTTSYPPTLGTSHSAHSVQSSLVR.

Belongs to the pecanex family. In terms of tissue distribution, specifically expressed in the germ line and not in the somatic cells of the testis, reaching its peak at the pachytene stage of the meiotic prophase. Detected in pachytene spermatocytes and round spermatids (at protein level).

The protein localises to the membrane. The protein is Pecanex-like protein 1 of Rattus norvegicus (Rat).